The following is a 67-amino-acid chain: DNA-directed RNA polymerase subunit omega (67 aa).

This sequence belongs to the RNA polymerase subunit omega family. As to quaternary structure, the RNAP catalytic core consists of 2 alpha, 1 beta, 1 beta' and 1 omega subunit. When a sigma factor is associated with the core the holoenzyme is formed, which can initiate transcription.

It catalyses the reaction RNA(n) + a ribonucleoside 5'-triphosphate = RNA(n+1) + diphosphate. Functionally, promotes RNA polymerase assembly. Latches the N- and C-terminal regions of the beta' subunit thereby facilitating its interaction with the beta and alpha subunits. The protein is DNA-directed RNA polymerase subunit omega of Exiguobacterium sibiricum (strain DSM 17290 / CCUG 55495 / CIP 109462 / JCM 13490 / 255-15).